The primary structure comprises 342 residues: 4-hydroxy-2-oxovalerate aldolase (342 aa).

Residues isoleucine 8–glutamine 260 form the Pyruvate carboxyltransferase domain. Position 16–17 (arginine 16–aspartate 17) interacts with substrate. Aspartate 17 lines the Mn(2+) pocket. Histidine 20 (proton acceptor) is an active-site residue. Serine 170 and histidine 199 together coordinate substrate. Residues histidine 199 and histidine 201 each contribute to the Mn(2+) site. Tyrosine 290 serves as a coordination point for substrate.

It belongs to the 4-hydroxy-2-oxovalerate aldolase family.

The enzyme catalyses (S)-4-hydroxy-2-oxopentanoate = acetaldehyde + pyruvate. This is 4-hydroxy-2-oxovalerate aldolase from Albidiferax ferrireducens (strain ATCC BAA-621 / DSM 15236 / T118) (Rhodoferax ferrireducens).